A 354-amino-acid polypeptide reads, in one-letter code: Rhodopsin (354 aa).

Over 1-36 the chain is Extracellular; it reads MNGTEGPYFYVPMVNTTGIVRSPYEYPQYYLVSPAA. 2 N-linked (GlcNAc...) asparagine glycosylation sites follow: N2 and N15. Residues 37–61 form a helical membrane-spanning segment; it reads YACLGAYMFFLILVGFPVNFLTLYV. Over 62–73 the chain is Cytoplasmic; that stretch reads TIEHKKLRTPLN. A helical membrane pass occupies residues 74–96; sequence YILLNLAVADLFMVFGGFTTTIY. The Extracellular segment spans residues 97–110; it reads TSMHGYFVLGRLGC. C110 and C187 form a disulfide bridge. Residues 111–133 form a helical membrane-spanning segment; the sequence is NLEGYFATLGGEIGLWSLVVLAV. Positions 134–136 match the 'Ionic lock' involved in activated form stabilization motif; that stretch reads ERW. Residues 134–152 lie on the Cytoplasmic side of the membrane; sequence ERWLVVCKPISNFRFTENH. Residues 153-173 traverse the membrane as a helical segment; that stretch reads AIMGLVFTWIMANACAAPPLL. The Extracellular segment spans residues 174-202; it reads GWSRYIPEGMQCSCGVDYYTRAEGFNNES. The helical transmembrane segment at 203–224 threads the bilayer; that stretch reads FVIYMFICHFCIPLVVVFFCYG. The Cytoplasmic segment spans residues 225-252; it reads RLLCAVKEAAAAQQESETTQRAEREVTR. Residues 253–274 form a helical membrane-spanning segment; sequence MVVILVIGFLVCWTPYASVAWY. Residues 275-286 lie on the Extracellular side of the membrane; sequence IFSNQGSEFGPL. Residues 287–308 traverse the membrane as a helical segment; that stretch reads FMTIPAFFAKSSSIYNPMIYIC. The residue at position 296 (K296) is an N6-(retinylidene)lysine. Residues 309 to 354 are Cytoplasmic-facing; the sequence is MNKQFRHCMITTLCCGKNPFEEEEGASTTASKTEASSVSSSSVSPA. S-palmitoyl cysteine attachment occurs at residues C322 and C323. The interval 333–354 is disordered; it reads GASTTASKTEASSVSSSSVSPA. Residues 334–354 show a composition bias toward low complexity; that stretch reads ASTTASKTEASSVSSSSVSPA.

It belongs to the G-protein coupled receptor 1 family. Opsin subfamily. Post-translationally, phosphorylated on some or all of the serine and threonine residues present in the C-terminal region. Contains one covalently linked retinal chromophore.

It localises to the membrane. The protein localises to the cell projection. The protein resides in the cilium. It is found in the photoreceptor outer segment. In terms of biological role, photoreceptor required for image-forming vision at low light intensity. While most salt water fish species use retinal as chromophore, most freshwater fish use 3-dehydroretinal, or a mixture of retinal and 3-dehydroretinal. Light-induced isomerization of 11-cis to all-trans retinal triggers a conformational change that activates signaling via G-proteins. Subsequent receptor phosphorylation mediates displacement of the bound G-protein alpha subunit by arrestin and terminates signaling. This chain is Rhodopsin (rho), found in Gambusia affinis (Western mosquitofish).